A 230-amino-acid chain; its full sequence is Ribonuclease 3 (230 aa).

The region spanning 10-133 (DPRLLSRIGY…IIGAIYLDSS (124 aa)) is the RNase III domain. A Mg(2+)-binding site is contributed by E46. D50 is an active-site residue. D119 and E122 together coordinate Mg(2+). E122 is a catalytic residue. The region spanning 161 to 230 (DPKSRLQEYL…AAEILKLLEQ (70 aa)) is the DRBM domain.

The protein belongs to the ribonuclease III family. As to quaternary structure, homodimer. It depends on Mg(2+) as a cofactor.

It is found in the cytoplasm. The catalysed reaction is Endonucleolytic cleavage to 5'-phosphomonoester.. Its function is as follows. Digests double-stranded RNA. Involved in the processing of primary rRNA transcript to yield the immediate precursors to the large and small rRNAs (23S and 16S). Processes some mRNAs, and tRNAs when they are encoded in the rRNA operon. Processes pre-crRNA and tracrRNA of type II CRISPR loci if present in the organism. The chain is Ribonuclease 3 from Acinetobacter baumannii (strain SDF).